A 221-amino-acid polypeptide reads, in one-letter code: Large ribosomal subunit protein uL3 (221 aa).

The tract at residues 140–160 is disordered; it reads GGPKTHGSGFHRHAGSIGMRS.

This sequence belongs to the universal ribosomal protein uL3 family. Part of the 50S ribosomal subunit. Forms a cluster with proteins L14 and L19.

In terms of biological role, one of the primary rRNA binding proteins, it binds directly near the 3'-end of the 23S rRNA, where it nucleates assembly of the 50S subunit. The sequence is that of Large ribosomal subunit protein uL3 from Chlamydia caviae (strain ATCC VR-813 / DSM 19441 / 03DC25 / GPIC) (Chlamydophila caviae).